Consider the following 259-residue polypeptide: BTB/POZ domain-containing protein KCTD4 (259 aa).

Residues 1-25 (MERKINRREKEKEYEGKHNSLEDTD) form a disordered region. Positions 33–134 (TLMTLNVGGY…EVKSRWEKEQ (102 aa)) constitute a BTB domain.

This is BTB/POZ domain-containing protein KCTD4 (KCTD4) from Homo sapiens (Human).